We begin with the raw amino-acid sequence, 144 residues long: Protection of telomeres protein 1c (144 aa).

Belongs to the telombin family. Expressed at extremely low levels at the limit of detection.

Its subcellular location is the nucleus. It is found in the chromosome. The protein localises to the telomere. Functionally, binds specifically single-stranded telomeric DNA with weak affinity. Has probably no function in the regulation of telomere length. The protein is Protection of telomeres protein 1c of Arabidopsis thaliana (Mouse-ear cress).